The chain runs to 631 residues: Fatty acid ABC transporter ATP-binding/permease protein (631 aa).

Residues 1 to 11 (MTAPPGARPRA) are compositionally biased toward low complexity. Positions 1–20 (MTAPPGARPRAASPPPNMRS) are disordered. The next 3 membrane-spanning stretches (helical) occupy residues 42-62 (IAVITLGIAGTTIGVIVPRIL), 123-143 (LALALALYLAAALMIWAQARL), and 205-225 (ILTMVAVLAMMVSISGLLALI). An ABC transmembrane type-1 domain is found at 42–365 (IAVITLGIAG…LAGMYNALQS (324 aa)). Residues 397–631 (VEFEHVNFAY…RGVYYQMTRA (235 aa)) enclose the ABC transporter domain. 430–437 (GPTGAGKT) contacts ATP.

This sequence belongs to the ABC transporter superfamily. Lipid exporter (TC 3.A.1.106) family.

Its subcellular location is the cell inner membrane. Its function is as follows. ABC transporter involved in fatty acid import. Transmembrane domains (TMD) form a pore in the membrane and the ATP-binding domain (NBD) is responsible for energy generation. The chain is Fatty acid ABC transporter ATP-binding/permease protein from Mycobacterium bovis (strain ATCC BAA-935 / AF2122/97).